The sequence spans 112 residues: Large ribosomal subunit protein bL17 (112 aa).

It belongs to the bacterial ribosomal protein bL17 family. In terms of assembly, part of the 50S ribosomal subunit. Contacts protein L32.

This is Large ribosomal subunit protein bL17 from Desulforudis audaxviator (strain MP104C).